The following is a 308-amino-acid chain: Methionyl-tRNA formyltransferase (308 aa).

109–112 is a binding site for (6S)-5,6,7,8-tetrahydrofolate; sequence SLLP.

This sequence belongs to the Fmt family.

The catalysed reaction is L-methionyl-tRNA(fMet) + (6R)-10-formyltetrahydrofolate = N-formyl-L-methionyl-tRNA(fMet) + (6S)-5,6,7,8-tetrahydrofolate + H(+). Functionally, attaches a formyl group to the free amino group of methionyl-tRNA(fMet). The formyl group appears to play a dual role in the initiator identity of N-formylmethionyl-tRNA by promoting its recognition by IF2 and preventing the misappropriation of this tRNA by the elongation apparatus. In Salinispora tropica (strain ATCC BAA-916 / DSM 44818 / JCM 13857 / NBRC 105044 / CNB-440), this protein is Methionyl-tRNA formyltransferase.